The sequence spans 391 residues: Zinc finger protein ubi-d4 (391 aa).

Ala2 carries the N-acetylalanine modification. Glycyl lysine isopeptide (Lys-Gly) (interchain with G-Cter in SUMO2) cross-links involve residues Lys10, Lys99, Lys107, and Lys108. Disordered regions lie at residues Trp79–Pro147 and Asp165–Ala199. Composition is skewed to basic and acidic residues over residues Pro100–Gly110 and Asp126–Asp140. Ser142 is subject to Phosphoserine. The segment covering Asp165–Glu174 has biased composition (acidic residues). The residue at position 172 (Tyr172) is a Phosphotyrosine. Thr176 bears the Phosphothreonine mark. Glycyl lysine isopeptide (Lys-Gly) (interchain with G-Cter in SUMO2) cross-links involve residues Lys178 and Lys196. Ser200 carries the phosphoserine modification. Residues Tyr209 to His232 form a C2H2-type zinc finger. The tract at residues Leu233–Leu266 is disordered. Residue Ser244 is modified to Phosphoserine. Over residues Arg253 to Pro263 the composition is skewed to basic and acidic residues. PHD-type zinc fingers lie at residues Asn270–Cys330 and Cys327–Leu377. Ser280 carries the post-translational modification Phosphoserine. A Glycyl lysine isopeptide (Lys-Gly) (interchain with G-Cter in SUMO2) cross-link involves residue Lys281.

The protein belongs to the requiem/DPF family. As to quaternary structure, interacts with the nucleosomes, in particular nucleosomes bearing histone H3 crotonylated at 'Lys-14' (H3K14cr) for which DPF2 has high affinity. Also interacts (via PHD-type zinc finger domains) with histone H3 butyrylated at 'Lys-14' (H3K14bu), histone H3 propionylated at 'Lys-14' (H3K14pr), and histone H3 acetylated at 'Lys-14' (H3K14ac). Interacts with histone H3 acetylated at 'Lys-9' (H3K9ac), histone H3 di-methylated at 'Lys-9' (H3K9me2), and histone H3 tri-methylated at 'Lys-9' (H3K9me3). Interacts with histone H4 acetylated at 'Lys-12' (H4K12ac). Interacts with histone H4 acetylated at 'Lys-16' (H4K16ac). Interacts with SWI/SNF complex components. Interacts with SMARCA2, SMARCA4, SMARCB1 and SMARCD1. Interacts with SMARCC1, SMARCC2 and ACTL6A. Interacts with RUNX1. As to expression, in embryo, highest levels are seen in brain, eyes, thymus and olfactory epithelium in nose, whereas several other tissues, including the musculoskeletal system, show moderate expression. In adult, higher expression in testis, medium in thymus and spleen, lower in certain parts of the brain as the hippocampus. No expression in adult heart, lung, liver, duodenum and kidney.

The protein resides in the nucleus. The protein localises to the cytoplasm. Functionally, plays an active role in transcriptional regulation by binding modified histones H3 and H4. Is a negative regulator of myeloid differentiation of hematopoietic progenitor cells. Might also have a role in the development and maturation of lymphoid cells. Involved in the regulation of non-canonical NF-kappa-B pathway. This is Zinc finger protein ubi-d4 (Dpf2) from Mus musculus (Mouse).